The primary structure comprises 1164 residues: Nuclear exosome regulator NRDE2 (1164 aa).

Disordered regions lie at residues 1–25 and 39–149; these read MALFPAFAGLSEAPDGGSSRKELDW and LSQQ…GHRF. A2 bears the N-acetylalanine mark. Over residues 61 to 73 the composition is skewed to basic and acidic residues; it reads LKSESSDESDTNK. The stretch at 61–383 forms a coiled coil; the sequence is LKSESSDESD…IESNQSSVDL (323 aa). The span at 74 to 103 shows a compositional bias: basic residues; sequence KLKQTSRKKKKEKKKKRKHQHHKKTKRKHG. A compositionally biased stretch (basic and acidic residues) spans 110 to 133; the sequence is SETDTDSEKDKPSRGVGGSKKESE. The MID/MTR4-interacting domain stretch occupies residues 163–266; it reads FRTDKKPDPA…KDLEDAAPVT (104 aa). A disordered region spans residues 279–305; that stretch reads TTHWLQGQGPPEQESKQPDAQPDSESA. HAT repeat units lie at residues 305 to 337, 395 to 427, 758 to 792, 978 to 1010, and 1067 to 1101; these read AALKAKVEEFNRRVRENPRDTQLWMAFVAFQDE, WEPSTLVKEWQKLIFLHPNNTALWQKYLLFCQS, SQGKNCKKLAKNLLKEPENCNNFCLWKQYAHLEWL, YPLAPLREALSQALKLYPGNQVLWRSYVQIQNK, and GLMHRIQALFENAMRSDSGSQCPLLWRMYLNFLVS.

It belongs to the NRDE2 family. Interacts with MTREX; the interaction is direct and stabilizes NRDE2. Interacts with EXOSC10, EFTUD2 and EIF4A3.

It localises to the nucleus speckle. Its subcellular location is the nucleus. The protein resides in the nucleolus. It is found in the nucleoplasm. Its function is as follows. Protein of the nuclear speckles that regulates RNA degradation and export from the nucleus through its interaction with MTREX an essential factor directing various RNAs to exosomal degradation. Changes the conformation of MTREX, precluding its association with the nuclear exosome and interaction with proteins required for its function in RNA exosomal degradation. Negatively regulates, for instance, the degradation of mRNAs and lncRNAs by inhibiting their MTREX-mediated recruitment to nuclear exosome. By preventing the degradation of RNAs in the nucleus, it promotes their export to the cytoplasm. U5 snRNP-associated RNA splicing factor which is required for efficient splicing of CEP131 pre-mRNA and plays an important role in centrosome maturation, integrity and function during mitosis. Suppresses intron retention in a subset of pre-mRNAs containing short, GC-rich introns with relatively weak 5' and 3' splice sites. Plays a role in DNA damage response. In Homo sapiens (Human), this protein is Nuclear exosome regulator NRDE2.